Consider the following 249-residue polypeptide: 3-deoxy-D-manno-octulosonic acid kinase (249 aa).

The active site involves D175.

This sequence belongs to the protein kinase superfamily. KdkA/RfaP family.

It is found in the cell inner membrane. It catalyses the reaction an alpha-Kdo-(2-&gt;6)-lipid IVA + ATP = a 4-O-phospho-alpha-Kdo-(2-&gt;6)-lipid IVA + ADP + H(+). It functions in the pathway bacterial outer membrane biogenesis; LPS core biosynthesis. Its function is as follows. Catalyzes the ATP-dependent phosphorylation of the 3-deoxy-D-manno-octulosonic acid (Kdo) residue in Kdo-lipid IV(A) at the 4-OH position. This is 3-deoxy-D-manno-octulosonic acid kinase from Xylella fastidiosa (strain M12).